Reading from the N-terminus, the 281-residue chain is Acetyl-coenzyme A carboxylase carboxyl transferase subunit beta (281 aa).

Residues 23–281 (IWTKCGSCQA…SLLVKLHYKN (259 aa)) form the CoA carboxyltransferase N-terminal domain. Residues cysteine 27, cysteine 30, cysteine 46, and cysteine 49 each coordinate Zn(2+). The segment at 27 to 49 (CGSCQAVLYKSELEKLQEVCPKC) adopts a C4-type zinc-finger fold.

Belongs to the AccD/PCCB family. As to quaternary structure, acetyl-CoA carboxylase is a heterohexamer composed of biotin carboxyl carrier protein (AccB), biotin carboxylase (AccC) and two subunits each of ACCase subunit alpha (AccA) and ACCase subunit beta (AccD). Zn(2+) is required as a cofactor.

It localises to the cytoplasm. It carries out the reaction N(6)-carboxybiotinyl-L-lysyl-[protein] + acetyl-CoA = N(6)-biotinyl-L-lysyl-[protein] + malonyl-CoA. The protein operates within lipid metabolism; malonyl-CoA biosynthesis; malonyl-CoA from acetyl-CoA: step 1/1. In terms of biological role, component of the acetyl coenzyme A carboxylase (ACC) complex. Biotin carboxylase (BC) catalyzes the carboxylation of biotin on its carrier protein (BCCP) and then the CO(2) group is transferred by the transcarboxylase to acetyl-CoA to form malonyl-CoA. This chain is Acetyl-coenzyme A carboxylase carboxyl transferase subunit beta, found in Alteromonas mediterranea (strain DSM 17117 / CIP 110805 / LMG 28347 / Deep ecotype).